A 98-amino-acid chain; its full sequence is Small proline-rich protein 2B (98 aa).

Repeat copies occupy residues 21–29, 30–38, 39–47, 48–56, and 57–65. The tract at residues 21-65 is 5 X 9 AA approximate tandem repeats; that stretch reads PKCPEPCPPPKCPEPCPPPVCCEPCPPPKCPEPCPPPVCCEPCPP.

The protein belongs to the cornifin (SPRR) family. Expressed in uterus.

The protein resides in the cytoplasm. Its function is as follows. Cross-linked envelope protein of keratinocytes. It is a keratinocyte protein that first appears in the cell cytosol, but ultimately becomes cross-linked to membrane proteins by transglutaminase. All that results in the formation of an insoluble envelope beneath the plasma membrane. This Mus musculus (Mouse) protein is Small proline-rich protein 2B (Sprr2b).